Reading from the N-terminus, the 449-residue chain is Signal recognition particle protein (449 aa).

Residues 109 to 116, 191 to 195, and 249 to 252 contribute to the GTP site; these read GLQGGGKT, DTAGR, and SRID.

Belongs to the GTP-binding SRP family. SRP54 subfamily. Part of the signal recognition particle protein translocation system, which is composed of SRP and FtsY. SRP is a ribonucleoprotein composed of Ffh and a 4.5S RNA molecule.

The protein resides in the cytoplasm. It carries out the reaction GTP + H2O = GDP + phosphate + H(+). Involved in targeting and insertion of nascent membrane proteins into the cytoplasmic membrane. Binds to the hydrophobic signal sequence of the ribosome-nascent chain (RNC) as it emerges from the ribosomes. The SRP-RNC complex is then targeted to the cytoplasmic membrane where it interacts with the SRP receptor FtsY. Interaction with FtsY leads to the transfer of the RNC complex to the Sec translocase for insertion into the membrane, the hydrolysis of GTP by both Ffh and FtsY, and the dissociation of the SRP-FtsY complex into the individual components. This is Signal recognition particle protein from Rickettsia typhi (strain ATCC VR-144 / Wilmington).